The chain runs to 353 residues: UPF0283 membrane protein KPN78578_12740 (353 aa).

3 helical membrane-spanning segments follow: residues 70–90 (MVSA…VQWT), 99–119 (WIAL…VGSL), and 213–233 (ESTL…FIAW).

The protein belongs to the UPF0283 family.

Its subcellular location is the cell inner membrane. This chain is UPF0283 membrane protein KPN78578_12740, found in Klebsiella pneumoniae subsp. pneumoniae (strain ATCC 700721 / MGH 78578).